Here is a 565-residue protein sequence, read N- to C-terminus: Carboxylesterase 1D (565 aa).

An N-terminal signal peptide occupies residues 1–18 (MRLYPLVWLFLAACTAWG). An N-linked (GlcNAc...) asparagine glycan is attached at Asn-79. A disulfide bond links Cys-87 and Cys-116. The active-site Acyl-ester intermediate is the Ser-221. A disulfide bond links Cys-273 and Cys-284. Residue Glu-353 is the Charge relay system of the active site. Residue Lys-382 is modified to N6-succinyllysine. Catalysis depends on His-466, which acts as the Charge relay system. Asn-489 is a glycosylation site (N-linked (GlcNAc...) asparagine). The short motif at 562–565 (HVEL) is the Prevents secretion from ER element.

This sequence belongs to the type-B carboxylesterase/lipase family. As to quaternary structure, homotrimer. In terms of tissue distribution, detected in liver, lung and testis, but not in kidney (at protein level).

The protein localises to the endoplasmic reticulum lumen. The protein resides in the cytoplasm. It localises to the cytosol. It is found in the lipid droplet. Its subcellular location is the microsome. The catalysed reaction is all-trans-retinyl hexadecanoate + H2O = all-trans-retinol + hexadecanoate + H(+). The enzyme catalyses a carboxylic ester + H2O = an alcohol + a carboxylate + H(+). It carries out the reaction a long-chain fatty acyl ethyl ester + H2O = a long-chain fatty acid + ethanol + H(+). FAEE-synthesizing and PNPB-hydrolyzing activities are both inhibited by DFP. In terms of biological role, major lipase in white adipose tissue. Involved in the metabolism of xenobiotics and of natural substrates. Hydrolyzes triacylglycerols and monoacylglycerols, with a preference for monoacylglycerols. The susceptibility of the substrate increases with decreasing acyl chain length of the fatty acid moiety. Catalyzes the synthesis of fatty acid ethyl esters. Hydrolyzes retinyl esters. The polypeptide is Carboxylesterase 1D (Rattus norvegicus (Rat)).